Reading from the N-terminus, the 336-residue chain is Glyoxylate reductase (336 aa).

Residues 158–161 (FGRI), 180–182 (SRT), and 239–241 (IAR) each bind NADP(+). Catalysis depends on residues Arg241 and Glu270. Catalysis depends on His288, which acts as the Proton donor. NADP(+) is bound at residue 288–290 (HIG).

It belongs to the D-isomer specific 2-hydroxyacid dehydrogenase family. GyaR subfamily. Homodimer.

The protein localises to the cytoplasm. It catalyses the reaction glycolate + NAD(+) = glyoxylate + NADH + H(+). The chain is Glyoxylate reductase from Pyrococcus furiosus (strain ATCC 43587 / DSM 3638 / JCM 8422 / Vc1).